The chain runs to 158 residues: Endoribonuclease YbeY (158 aa).

The Zn(2+) site is built by His-114, His-118, and His-124.

It belongs to the endoribonuclease YbeY family. Requires Zn(2+) as cofactor.

It localises to the cytoplasm. In terms of biological role, single strand-specific metallo-endoribonuclease involved in late-stage 70S ribosome quality control and in maturation of the 3' terminus of the 16S rRNA. This chain is Endoribonuclease YbeY, found in Pasteurella multocida (strain Pm70).